A 262-amino-acid polypeptide reads, in one-letter code: Zinc import ATP-binding protein ZnuC (262 aa).

The ABC transporter domain occupies 5 to 220 (VSLEQLCVEF…PSYIALFGNA (216 aa)). ATP is bound at residue 37–44 (GPNGAGKS). Residues 236–262 (HHDLSGSPVSGDATSCSNHNHGHHHHD) form a disordered region.

The protein belongs to the ABC transporter superfamily. Zinc importer (TC 3.A.1.15.5) family. In terms of assembly, the complex is composed of two ATP-binding proteins (ZnuC), two transmembrane proteins (ZnuB) and a solute-binding protein (ZnuA).

The protein resides in the cell inner membrane. The catalysed reaction is Zn(2+)(out) + ATP(in) + H2O(in) = Zn(2+)(in) + ADP(in) + phosphate(in) + H(+)(in). In terms of biological role, part of the ABC transporter complex ZnuABC involved in zinc import. Responsible for energy coupling to the transport system. The chain is Zinc import ATP-binding protein ZnuC from Vibrio parahaemolyticus serotype O3:K6 (strain RIMD 2210633).